The chain runs to 148 residues: MRTSYLKKIPIMNSDSDLKLQKVWIERHVDQDELSLTTTAVELKKSDEQKPVAIKSSDFIGHEELISVPVLLIPTPVVKEIDQPAVIPPVKAKPKATKKKTPVKSKPTSKSTKQTKPKQSKPKSKQVQQTKAKPTQIQTKKSNKKTRS.

Residues 83–148 (QPAVIPPVKA…TKKSNKKTRS (66 aa)) are disordered. 2 stretches are compositionally biased toward basic residues: residues 92–103 (AKPKATKKKTPV) and 113–124 (KQTKPKQSKPKS).

This is an uncharacterized protein from Mycoplasma genitalium (strain ATCC 33530 / DSM 19775 / NCTC 10195 / G37) (Mycoplasmoides genitalium).